A 312-amino-acid chain; its full sequence is Malate dehydrogenase (312 aa).

NAD(+) is bound by residues 7–13 (GAAGGIG) and aspartate 34. Substrate is bound by residues arginine 81 and arginine 87. Residues asparagine 94 and 117–119 (ITN) contribute to the NAD(+) site. Residues asparagine 119 and arginine 153 each coordinate substrate. Residue histidine 177 is the Proton acceptor of the active site. Methionine 227 provides a ligand contact to NAD(+).

The protein belongs to the LDH/MDH superfamily. MDH type 1 family. In terms of assembly, homodimer.

It catalyses the reaction (S)-malate + NAD(+) = oxaloacetate + NADH + H(+). Functionally, catalyzes the reversible oxidation of malate to oxaloacetate. The protein is Malate dehydrogenase of Salmonella arizonae (strain ATCC BAA-731 / CDC346-86 / RSK2980).